A 112-amino-acid chain; its full sequence is High mobility group protein D (112 aa).

A DNA-binding region (HMG box) is located at residues 5-71 (PKRPLSAYML…DYDRAVKEFE (67 aa)). The residue at position 10 (Ser-10) is a Phosphoserine. Tyr-12 bears the Phosphotyrosine mark. The disordered stretch occupies residues 72–112 (ANGGSSAANGGGAKKRAKPAKKVAKKSKKEESDEDDDDESE). The span at 84–98 (AKKRAKPAKKVAKKS) shows a compositional bias: basic residues. Phosphoserine is present on residues Ser-103 and Ser-111. Over residues 103-112 (SDEDDDDESE) the composition is skewed to acidic residues.

It belongs to the HMGB family.

The protein resides in the nucleus. The protein localises to the chromosome. Binds preferentially single-stranded DNA and unwinds double-stranded DNA. Prefers sites containing the sequence 5'-ttg-3'. Facilitates DNA bending. Associated with early embryonic chromatin in the absence of histone H1. The polypeptide is High mobility group protein D (HmgD) (Drosophila melanogaster (Fruit fly)).